The chain runs to 126 residues: Large ribosomal subunit protein bL12 (126 aa).

Belongs to the bacterial ribosomal protein bL12 family. In terms of assembly, homodimer. Part of the ribosomal stalk of the 50S ribosomal subunit. Forms a multimeric L10(L12)X complex, where L10 forms an elongated spine to which 2 to 4 L12 dimers bind in a sequential fashion. Binds GTP-bound translation factors.

In terms of biological role, forms part of the ribosomal stalk which helps the ribosome interact with GTP-bound translation factors. Is thus essential for accurate translation. The sequence is that of Large ribosomal subunit protein bL12 from Desulforudis audaxviator (strain MP104C).